We begin with the raw amino-acid sequence, 86 residues long: Small ribosomal subunit protein bS20 (86 aa).

Residues 1–26 (MANIKSAKKRAITSEKRRQHNASRRS) form a disordered region.

Belongs to the bacterial ribosomal protein bS20 family.

In terms of biological role, binds directly to 16S ribosomal RNA. The polypeptide is Small ribosomal subunit protein bS20 (Photobacterium profundum (strain SS9)).